Consider the following 391-residue polypeptide: Elongation factor Tu (391 aa).

The region spanning 10–201 is the tr-type G domain; that stretch reads KPHVNIGTIG…AVDEYIPTPA (192 aa). The segment at 19–26 is G1; that stretch reads GHVDHGKT. 19–26 contacts GTP; that stretch reads GHVDHGKT. Residue Thr26 coordinates Mg(2+). Residues 55 to 59 are G2; it reads GITIS. Positions 76-79 are G3; it reads DCPG. Residues 76-80 and 131-134 contribute to the GTP site; these read DCPGH and NKVD. Residues 131–134 form a G4 region; the sequence is NKVD. Residues 169 to 171 form a G5 region; it reads SAL.

The protein belongs to the TRAFAC class translation factor GTPase superfamily. Classic translation factor GTPase family. EF-Tu/EF-1A subfamily. Monomer.

Its subcellular location is the cytoplasm. It carries out the reaction GTP + H2O = GDP + phosphate + H(+). GTP hydrolase that promotes the GTP-dependent binding of aminoacyl-tRNA to the A-site of ribosomes during protein biosynthesis. This Cereibacter sphaeroides (strain ATCC 17025 / ATH 2.4.3) (Rhodobacter sphaeroides) protein is Elongation factor Tu.